The primary structure comprises 949 residues: Protein translocase subunit SecA 1 (949 aa).

ATP contacts are provided by residues Q86, 104–108, and D493; that span reads GEGKT. A disordered region spans residues 869–949; it reads VDGGARERAP…AKPPKSVKKR (81 aa). Positions 925–934 are enriched in basic and acidic residues; that stretch reads SRRERREAAR.

The protein belongs to the SecA family. As to quaternary structure, monomer and homodimer. Part of the essential Sec protein translocation apparatus which comprises SecA, SecYEG and auxiliary proteins SecDF. Other proteins may also be involved.

Its subcellular location is the cell membrane. The protein localises to the cytoplasm. The enzyme catalyses ATP + H2O + cellular proteinSide 1 = ADP + phosphate + cellular proteinSide 2.. Its function is as follows. Part of the Sec protein translocase complex. Interacts with the SecYEG preprotein conducting channel. Has a central role in coupling the hydrolysis of ATP to the transfer of proteins into and across the cell membrane, serving as an ATP-driven molecular motor driving the stepwise translocation of polypeptide chains across the membrane. The protein is Protein translocase subunit SecA 1 of Mycobacterium bovis (strain ATCC BAA-935 / AF2122/97).